A 438-amino-acid polypeptide reads, in one-letter code: DEAD-box ATP-dependent RNA helicase CshB (438 aa).

A Q motif motif is present at residues 4–32 (TKFELYELKPFIIDAVHRLGFYEPTDIQK). The Helicase ATP-binding domain maps to 35–208 (IPAVLKKESV…KKYMENPKYA (174 aa)). 48–55 (SQTGTGKT) contributes to the ATP binding site. Positions 156–159 (DEAD) match the DEAD box motif. A Helicase C-terminal domain is found at 235–385 (LLFDIMSHLN…EWKKGDDRQR (151 aa)). Residues 380 to 438 (GDDRQRRKKRKKTPNEADEIAHRLVKKPKKVKPGYKKKMSYEMEKIKKKQRRNQSKKRK) form a disordered region. Positions 392-401 (TPNEADEIAH) are enriched in basic and acidic residues. 2 stretches are compositionally biased toward basic residues: residues 402–417 (RLVKKPKKVKPGYKKK) and 425–438 (IKKKQRRNQSKKRK).

Belongs to the DEAD box helicase family. Interacts with CspB when cells are transcriptionally active. May interact with RNA helicases CshA and DbpA (DeaD), may be a component of a possible RNA degradosome complex composed of rny, rnja, rnjb, pnp, pfkA and eno (although rnjA and rnjB's presence is unclear). Specifically interacts with pnp and rny.

The protein localises to the cytoplasm. Its subcellular location is the nucleoid. It carries out the reaction ATP + H2O = ADP + phosphate + H(+). Its function is as follows. DEAD-box RNA helicase that plays a role in 70S ribosome assembly. May work in conjunction with the cold shock proteins to ensure proper initiation of transcription at low and optimal temperatures. The chain is DEAD-box ATP-dependent RNA helicase CshB from Bacillus subtilis (strain 168).